The following is a 250-amino-acid chain: 2,3-bisphosphoglycerate-dependent phosphoglycerate mutase (250 aa).

Substrate is bound by residues 10–17 (RHGESQWN), 23–24 (TG), R62, 89–92 (ERHY), K100, 116–117 (RR), and 185–186 (GN). Residue H11 is the Tele-phosphohistidine intermediate of the active site. Residue E89 is the Proton donor/acceptor of the active site.

Belongs to the phosphoglycerate mutase family. BPG-dependent PGAM subfamily. In terms of assembly, homodimer.

The catalysed reaction is (2R)-2-phosphoglycerate = (2R)-3-phosphoglycerate. It participates in carbohydrate degradation; glycolysis; pyruvate from D-glyceraldehyde 3-phosphate: step 3/5. In terms of biological role, catalyzes the interconversion of 2-phosphoglycerate and 3-phosphoglycerate. The protein is 2,3-bisphosphoglycerate-dependent phosphoglycerate mutase of Cronobacter sakazakii (strain ATCC BAA-894) (Enterobacter sakazakii).